The sequence spans 239 residues: Probable transcriptional regulatory protein YeeI (239 aa).

Belongs to the TACO1 family. YeeN subfamily.

The protein resides in the cytoplasm. This Bacillus subtilis (strain 168) protein is Probable transcriptional regulatory protein YeeI (yeeI).